The chain runs to 313 residues: MSDVPDDANAGCPGTGSAGAGKASGCAGCPNQGSCATGQGPPPDADVPKIQDRFSRIKHKILILSGKGGVGKSTLTSNLARALASDPSKQVAILDVDICGPSQPRMMGVEDEEVHNSADGWTPVGIQPNLTLMSIAFLLGDKNDAVIWRGARKNGMIKQFLKDVDWGEVDYLLIDTPPGTSDEHISLVQFLLQAGPLDGALIVSTPQEVSLLDVRKEVSFCVKTKVPILGVVENMARFVCPNCAHTTLLFPTSTGGAEQMCKDSNLELLAQLPLEPALAKALDNGEDFFETNPDSTLAKSFLDLAEKVKAKLV.

The interval 1–25 (MSDVPDDANAGCPGTGSAGAGKASG) is disordered. [4Fe-4S] cluster contacts are provided by C12, C26, C29, and C35. 66–73 (GKGGVGKS) is an ATP binding site. Residues C240 and C243 each contribute to the [4Fe-4S] cluster site.

Belongs to the Mrp/NBP35 ATP-binding proteins family. NUBP1/NBP35 subfamily. As to quaternary structure, heterotetramer of 2 NUBP1 and 2 NUBP2 chains. Requires [4Fe-4S] cluster as cofactor. As to expression, expressed in head amphid and labial ciliated sensory neurons and tail phasmid ciliated chemosensory neurons.

The protein localises to the cytoplasm. It is found in the cell projection. In terms of biological role, component of the cytosolic iron-sulfur (Fe/S) protein assembly (CIA) machinery. Required for maturation of extramitochondrial Fe-S proteins. The NUBP1-NUBP2 heterotetramer forms a Fe-S scaffold complex, mediating the de novo assembly of an Fe-S cluster and its transfer to target apoproteins. Regulates cilium formation and structure. In Caenorhabditis elegans, this protein is Cytosolic Fe-S cluster assembly factor NUBP1 homolog.